The sequence spans 80 residues: Putative defensin-like protein 15 (80 aa).

A signal peptide spans 1–29; sequence MAKFASIITFIYAALVLFAAFEVPTMVEA. Glutamine 30 bears the Pyrrolidone carboxylic acid mark. Disulfide bonds link cysteine 33–cysteine 80, cysteine 44–cysteine 65, cysteine 50–cysteine 74, and cysteine 54–cysteine 76.

The protein belongs to the DEFL family.

The protein localises to the secreted. Functionally, confers broad-spectrum resistance to pathogens. The sequence is that of Putative defensin-like protein 15 (PDF1.2B) from Arabidopsis thaliana (Mouse-ear cress).